A 425-amino-acid chain; its full sequence is tRNA(Ile)-lysidine synthase (425 aa).

27–32 (SGGLDS) is a binding site for ATP.

It belongs to the tRNA(Ile)-lysidine synthase family.

Its subcellular location is the cytoplasm. It carries out the reaction cytidine(34) in tRNA(Ile2) + L-lysine + ATP = lysidine(34) in tRNA(Ile2) + AMP + diphosphate + H(+). Ligates lysine onto the cytidine present at position 34 of the AUA codon-specific tRNA(Ile) that contains the anticodon CAU, in an ATP-dependent manner. Cytidine is converted to lysidine, thus changing the amino acid specificity of the tRNA from methionine to isoleucine. This is tRNA(Ile)-lysidine synthase from Streptococcus gordonii (strain Challis / ATCC 35105 / BCRC 15272 / CH1 / DL1 / V288).